A 450-amino-acid polypeptide reads, in one-letter code: Keratin, type I cytoskeletal 25 (450 aa).

A disordered region spans residues 1–24 (MSLRLPSGSRRASPRPTTGSLRLS). Residues 1-78 (MSLRLPSGSR…MNEGGLLSGN (78 aa)) are head. The segment at 79-114 (EKVTMQNLNDRLASYLENVRALEEANADLEQKIKGW) is coil 1A. The IF rod domain occupies 79-394 (EKVTMQNLND…LLIGGDDGAC (316 aa)). The interval 115-136 (YEKFGPGSCRGLDHDYSRYFPI) is linker 1. Residues 137–228 (IEDLKNQIIA…KNHKEEMQVL (92 aa)) form a coil 1B region. The tract at residues 229 to 251 (QCAAGGNVNVEMNAAPGVDLTVL) is linker 12. The tract at residues 252 to 390 (LNNMRAEYEA…ETYCLLIGGD (139 aa)) is coil 2. Positions 391–450 (DGACKSGGYKSKDYAAGNMGNQMKDPIKAIVVKKVLEEVDQRSKILTTRLHSLEEKSQSN) are tail. S442 carries the phosphoserine modification.

The protein belongs to the intermediate filament family. Heterodimer of a type I and a type II keratin. Heterodimer with type II keratin KRT5 leading to the formation of keratin intermediate filament (KIF) network. Interacts with KRT6A to form filaments.

Its subcellular location is the cytoplasm. Essential for the proper assembly of type I and type II keratin protein complexes and formation of keratin intermediate filaments in the inner root sheath (irs). Plays a role in the cytoskeleton organization. The sequence is that of Keratin, type I cytoskeletal 25 from Capra hircus (Goat).